Consider the following 270-residue polypeptide: Glutamate racemase (270 aa).

Residues 7–8 (DS) and 39–40 (YG) contribute to the substrate site. C70 functions as the Proton donor/acceptor in the catalytic mechanism. Substrate is bound at residue 71-72 (NT). C194 (proton donor/acceptor) is an active-site residue. 195–196 (TH) provides a ligand contact to substrate.

It belongs to the aspartate/glutamate racemases family.

The enzyme catalyses L-glutamate = D-glutamate. The protein operates within cell wall biogenesis; peptidoglycan biosynthesis. Its function is as follows. Provides the (R)-glutamate required for cell wall biosynthesis. This chain is Glutamate racemase, found in Paracoccus denitrificans (strain Pd 1222).